The chain runs to 638 residues: Threonine--tRNA ligase 2 (638 aa).

Residues 1-64 form the TGS domain; sequence MSKHVHIQLP…EEDAELSIVT (64 aa). Residues 245-535 are catalytic; it reads DHRKLGKQLG…LIEHYGGAFP (291 aa). Residues Cys-336, His-387, and His-512 each contribute to the Zn(2+) site.

It belongs to the class-II aminoacyl-tRNA synthetase family. Homodimer. Zn(2+) is required as a cofactor.

Its subcellular location is the cytoplasm. The enzyme catalyses tRNA(Thr) + L-threonine + ATP = L-threonyl-tRNA(Thr) + AMP + diphosphate + H(+). In terms of biological role, catalyzes the attachment of threonine to tRNA(Thr) in a two-step reaction: L-threonine is first activated by ATP to form Thr-AMP and then transferred to the acceptor end of tRNA(Thr). Also edits incorrectly charged L-seryl-tRNA(Thr). The protein is Threonine--tRNA ligase 2 (thrZ) of Bacillus subtilis (strain 168).